The following is a 271-amino-acid chain: Putative glucose-6-phosphate 1-epimerase (271 aa).

Substrate-binding residues include Arg-71 and Arg-93. The active site involves His-151. Asp-193 is a substrate binding site. The active site involves Glu-249.

This sequence belongs to the glucose-6-phosphate 1-epimerase family.

The catalysed reaction is alpha-D-glucose 6-phosphate = beta-D-glucose 6-phosphate. The protein is Putative glucose-6-phosphate 1-epimerase of Haemophilus influenzae (strain ATCC 51907 / DSM 11121 / KW20 / Rd).